The chain runs to 342 residues: Heparan sulfate glucosamine 3-O-sulfotransferase 6 (342 aa).

The Cytoplasmic portion of the chain corresponds to 1–31 (MAGSGGLGGGAGDLQGAGTGQGTALRALRAP). A helical; Signal-anchor for type II membrane protein transmembrane segment spans residues 32-49 (LALVVLLLSAYCLFALPG). Topologically, residues 50–342 (RCPPAARAPA…QMTGQDFGWD (293 aa)) are lumenal. A disordered region spans residues 56–75 (RAPAPVPAPAEPPHTSLRLR). 100–104 (KGGTR) is a binding site for 3'-phosphoadenylyl sulfate. Substrate-binding positions include 122–128 (EPHFFDR) and 153–156 (KTPS). 2 residues coordinate 3'-phosphoadenylyl sulfate: arginine 181 and serine 189. Position 220-221 (220-221 (WS)) interacts with substrate. Asparagine 281 carries N-linked (GlcNAc...) asparagine glycosylation. A disulfide bridge links cysteine 288 with cysteine 300. 305–309 (KGRPH) is a binding site for 3'-phosphoadenylyl sulfate.

The protein belongs to the sulfotransferase 1 family. As to expression, expressed in liver and kidney, followed by heart, brain, lung and testis.

The protein resides in the golgi apparatus membrane. It catalyses the reaction alpha-D-glucosaminyl-[heparan sulfate](n) + 3'-phosphoadenylyl sulfate = 3-sulfo-alpha-D-glucosaminyl-[heparan sulfate](n) + adenosine 3',5'-bisphosphate + H(+). Functionally, sulfotransferase that utilizes 3'-phospho-5'-adenylyl sulfate (PAPS) to catalyze the transfer of a sulfo group to heparan sulfate. Unlike 3-OST-1, does not convert non-anticoagulant heparan sulfate to anticoagulant heparan sulfate. The protein is Heparan sulfate glucosamine 3-O-sulfotransferase 6 (Hs3st6) of Mus musculus (Mouse).